We begin with the raw amino-acid sequence, 366 residues long: Carbamoyl phosphate synthase small chain (366 aa).

The segment at 1–172 is CPSase; sequence MYGILVLEDG…TYNAENEKTS (172 aa). L-glutamine contacts are provided by serine 45, glycine 220, and glycine 222. Residues 172–363 enclose the Glutamine amidotransferase type-1 domain; the sequence is SCVLIDCGVK…VELGIKFKAE (192 aa). The active-site Nucleophile is the cysteine 247. Leucine 248, glutamine 251, asparagine 289, glycine 291, and phenylalanine 292 together coordinate L-glutamine. Residues histidine 336 and glutamate 338 contribute to the active site.

It belongs to the CarA family. In terms of assembly, composed of two chains; the small (or glutamine) chain promotes the hydrolysis of glutamine to ammonia, which is used by the large (or ammonia) chain to synthesize carbamoyl phosphate. Tetramer of heterodimers (alpha,beta)4.

It catalyses the reaction hydrogencarbonate + L-glutamine + 2 ATP + H2O = carbamoyl phosphate + L-glutamate + 2 ADP + phosphate + 2 H(+). The enzyme catalyses L-glutamine + H2O = L-glutamate + NH4(+). It functions in the pathway amino-acid biosynthesis; L-arginine biosynthesis; carbamoyl phosphate from bicarbonate: step 1/1. The protein operates within pyrimidine metabolism; UMP biosynthesis via de novo pathway; (S)-dihydroorotate from bicarbonate: step 1/3. Functionally, small subunit of the glutamine-dependent carbamoyl phosphate synthetase (CPSase). CPSase catalyzes the formation of carbamoyl phosphate from the ammonia moiety of glutamine, carbonate, and phosphate donated by ATP, constituting the first step of 2 biosynthetic pathways, one leading to arginine and/or urea and the other to pyrimidine nucleotides. The small subunit (glutamine amidotransferase) binds and cleaves glutamine to supply the large subunit with the substrate ammonia. This is Carbamoyl phosphate synthase small chain from Methanococcus maripaludis (strain C7 / ATCC BAA-1331).